We begin with the raw amino-acid sequence, 519 residues long: cAMP-dependent protein kinase catalytic subunit (519 aa).

The tract at residues 1-195 is disordered; the sequence is MLPDTGILSP…SQTLQKAENA (195 aa). 3 stretches are compositionally biased toward polar residues: residues 10–25, 116–159, and 173–191; these read PFTT…SQTL, VTPS…TSPI, and TPVN…TLQK. Residues 208–463 form the Protein kinase domain; it reads FNFQRTLGTG…SRSVLEHPWF (256 aa). ATP is bound by residues 214 to 222 and lysine 237; that span reads LGTGSFGRV. The Proton acceptor role is filled by aspartate 331. The region spanning 464–519 is the AGC-kinase C-terminal domain; sequence AEVNWERLLSKQIEPPYVPPVRGGIGDASLFDKYPEETEEYGKDGPDQYGHFFTDF.

This sequence belongs to the protein kinase superfamily. Ser/Thr protein kinase family.

It catalyses the reaction L-seryl-[protein] + ATP = O-phospho-L-seryl-[protein] + ADP + H(+). It carries out the reaction L-threonyl-[protein] + ATP = O-phospho-L-threonyl-[protein] + ADP + H(+). Activated by cAMP. In terms of biological role, functions downstream of adenylate cyclase to regulate trap-development for nematode capture. The sequence is that of cAMP-dependent protein kinase catalytic subunit from Arthrobotrys oligospora (strain ATCC 24927 / CBS 115.81 / DSM 1491) (Nematode-trapping fungus).